The following is a 155-amino-acid chain: Ribosomal RNA large subunit methyltransferase H (155 aa).

Residues Leu72, Gly103, and Leu122–Trp127 contribute to the S-adenosyl-L-methionine site.

The protein belongs to the RNA methyltransferase RlmH family. As to quaternary structure, homodimer.

Its subcellular location is the cytoplasm. It carries out the reaction pseudouridine(1915) in 23S rRNA + S-adenosyl-L-methionine = N(3)-methylpseudouridine(1915) in 23S rRNA + S-adenosyl-L-homocysteine + H(+). Its function is as follows. Specifically methylates the pseudouridine at position 1915 (m3Psi1915) in 23S rRNA. The chain is Ribosomal RNA large subunit methyltransferase H from Cereibacter sphaeroides (strain KD131 / KCTC 12085) (Rhodobacter sphaeroides).